The chain runs to 20 residues: Styelin-A (20 aa).

As to expression, hemocytes and pharyngeal tissues.

The protein resides in the secreted. Its function is as follows. Bactericidal against several Gram-positive and Gram-negative bacteria. This Styela clava (Sea squirt) protein is Styelin-A.